The following is a 384-amino-acid chain: S-adenosylmethionine synthase (384 aa).

Residue histidine 15 participates in ATP binding. Residue aspartate 17 participates in Mg(2+) binding. Glutamate 43 contributes to the K(+) binding site. L-methionine is bound by residues glutamate 56 and glutamine 99. The segment at 99–109 is flexible loop; the sequence is QSPDINQGVDR. Residues 164 to 166, 230 to 231, aspartate 239, 245 to 246, alanine 262, and lysine 266 contribute to the ATP site; these read DAK, RF, and RK. Aspartate 239 is an L-methionine binding site. An L-methionine-binding site is contributed by lysine 270.

It belongs to the AdoMet synthase family. In terms of assembly, homotetramer; dimer of dimers. Mg(2+) is required as a cofactor. K(+) serves as cofactor.

The protein localises to the cytoplasm. The catalysed reaction is L-methionine + ATP + H2O = S-adenosyl-L-methionine + phosphate + diphosphate. It participates in amino-acid biosynthesis; S-adenosyl-L-methionine biosynthesis; S-adenosyl-L-methionine from L-methionine: step 1/1. Functionally, catalyzes the formation of S-adenosylmethionine (AdoMet) from methionine and ATP. The overall synthetic reaction is composed of two sequential steps, AdoMet formation and the subsequent tripolyphosphate hydrolysis which occurs prior to release of AdoMet from the enzyme. This is S-adenosylmethionine synthase from Yersinia pseudotuberculosis serotype IB (strain PB1/+).